The primary structure comprises 434 residues: MQKADFIDRIVIYVKGGKGGDGSASFRHEKYVPKGGPDGGDGGNGGYVFLKANPNLSTLLSVSEKKKYIAENGENGKGKKMHGRNGKDVVIDVPVGTVVKDFETGEIIADLDKPGMVVCVARGGKGGRGNVHFKSSTMRAPKISERGFEGEERKLVLELKLLADVGLVGYPNVGKSSFISKISNARPKIANYPFTTTIPNLGVVTVNELQFVVADIPGLIKGASKGAGLGNVFLRHVERCSVIAHIVDISGMEGRDPVQDYFDIRNELEHFSSELAQKEEIIIANKIDLISKEELEKRLEKLRKETGKQIFPTSIITGEGIEKIVYKLAEIVKESKKFHTQSEVVNEQIKRPKPLWKELPERFNIEIIKEGNDFIVTGTYVEEWAKRLNLNQKDGYRKFMELLEKNGLEKKLKEAGIKDGDTVWVAQRAFEYKE.

The region spanning 4–162 (ADFIDRIVIY…RKLVLELKLL (159 aa)) is the Obg domain. Residues 163-333 (ADVGLVGYPN…IVYKLAEIVK (171 aa)) form the OBG-type G domain. GTP contacts are provided by residues 169 to 176 (GYPNVGKS), 194 to 198 (FTTTI), 215 to 218 (DIPG), 285 to 288 (NKID), and 314 to 316 (SII). The Mg(2+) site is built by Ser-176 and Thr-196. The OCT domain maps to 355 to 434 (LWKELPERFN…VAQRAFEYKE (80 aa)).

This sequence belongs to the TRAFAC class OBG-HflX-like GTPase superfamily. OBG GTPase family. Monomer. Mg(2+) serves as cofactor.

It localises to the cytoplasm. Its function is as follows. An essential GTPase which binds GTP, GDP and possibly (p)ppGpp with moderate affinity, with high nucleotide exchange rates and a fairly low GTP hydrolysis rate. Plays a role in control of the cell cycle, stress response, ribosome biogenesis and in those bacteria that undergo differentiation, in morphogenesis control. This chain is GTPase Obg, found in Thermosipho africanus (strain TCF52B).